Reading from the N-terminus, the 440-residue chain is Thymidine phosphorylase (440 aa).

Belongs to the thymidine/pyrimidine-nucleoside phosphorylase family. Homodimer.

It catalyses the reaction thymidine + phosphate = 2-deoxy-alpha-D-ribose 1-phosphate + thymine. The protein operates within pyrimidine metabolism; dTMP biosynthesis via salvage pathway; dTMP from thymine: step 1/2. In terms of biological role, the enzymes which catalyze the reversible phosphorolysis of pyrimidine nucleosides are involved in the degradation of these compounds and in their utilization as carbon and energy sources, or in the rescue of pyrimidine bases for nucleotide synthesis. The protein is Thymidine phosphorylase of Klebsiella pneumoniae (strain 342).